The sequence spans 389 residues: Type 2 DNA topoisomerase 6 subunit A (389 aa).

In terms of domain architecture, Topo IIA-type catalytic spans 12-162 (EARRKAANIL…MLILSKEKGK (151 aa)). Tyrosine 106 (O-(5'-phospho-DNA)-tyrosine intermediate) is an active-site residue. Positions 209 and 261 each coordinate Mg(2+).

It belongs to the TOP6A family. Homodimer. Heterotetramer of two Top6A and two Top6B chains. The cofactor is Mg(2+).

It carries out the reaction ATP-dependent breakage, passage and rejoining of double-stranded DNA.. With respect to regulation, not inhibited by the DNA gyrase inhibitor novobiocin, instead inhibited by eukaryotic topoisomerase inhibitors such as m- and o-amsacrine, ellipticine, and the quinolone CP-115,953. In terms of biological role, relaxes both positive and negative supercoils and exhibits a strong decatenase and unknotting activity; it cannot introduce DNA supercoils. ATP is absolutely required for DNA cleavage; the nonhydrolyzable analog AMP-PNP generates nicked or linear products from a supercoiled dsDNA substrate. Generates staggered two-nucleotide long 5' overhangs. The enzyme is covalently attached transiently to the 5'-ends of the cleaved strands. The protein is Type 2 DNA topoisomerase 6 subunit A of Saccharolobus shibatae (strain ATCC 51178 / DSM 5389 / JCM 8931 / NBRC 15437 / B12) (Sulfolobus shibatae).